The chain runs to 536 residues: Solute carrier family 2, facilitated glucose transporter member 10 (536 aa).

At 1–15 (MGLRPAVLLLCASVS) the chain is on the cytoplasmic side. Residues 16–36 (LLGGLTFGYELAVISGALLPL) traverse the membrane as a helical segment. The Extracellular segment spans residues 37 to 48 (QLNFGLSCLEQE). The helical transmembrane segment at 49–69 (LLVGSLLLGALLASLVGGFLI) threads the bilayer. Residues 70–82 (DCYGRRRAILGSN) are Cytoplasmic-facing. Residues 83-103 (AVLLAGSLILGLASSLPWLLL) traverse the membrane as a helical segment. The Extracellular portion of the chain corresponds to 104–107 (GRLS). Residues 108-128 (VGFAISLSSMACCIYVSELVG) form a helical membrane-spanning segment. The Cytoplasmic segment spans residues 129 to 132 (PRQR). The helical transmembrane segment at 133 to 153 (GVLVSLYEVGITVGILFSYGL) threads the bilayer. At 154–166 (NYVLAGSPWGWRH) the chain is on the extracellular side. A helical membrane pass occupies residues 167–187 (MFGWAAAPALLQSLSLFLLPA). Over 188–232 (GAEGTAAPKDLIPLQGRETSKPGLVKPQYSFLDLFRAQDGMWSRT) the chain is Cytoplasmic. A helical membrane pass occupies residues 233–253 (VVGLGLVLFQQLTGQPNVLYY). 242 to 243 (QQ) is a D-glucose binding site. At 254–269 (ASTIFRSVGFHGGSSA) the chain is on the extracellular side. Residues 270 to 290 (VLASVGLGTVKVAATLVATGL) traverse the membrane as a helical segment. Residues 291-298 (VDRAGRRV) lie on the Cytoplasmic side of the membrane. A helical transmembrane segment spans residues 299–319 (LLLFGCALMALSVSGIGLVSF). The Extracellular portion of the chain corresponds to 320–402 (AVSLDSGPSC…VPTSPILEHT (83 aa)). The chain crosses the membrane as a helical span at residues 403 to 423 (LLCWSALVCMMVYVSAFSVGF). The Cytoplasmic portion of the chain corresponds to 424–442 (GPVTWLVLSEIYPAEIRGR). Tryptophan 428 lines the D-glucose pocket. A helical transmembrane segment spans residues 443–463 (AFAFCSSFNWAANLFISLSFL). At 464 to 468 (DLIGA) the chain is on the extracellular side. The helical transmembrane segment at 469–489 (IGLAWTFLLYGLTAVLGLAFI) threads the bilayer. Residues 490 to 536 (YLLVPETKGQSLAEIEQQFQTSRFPLNFGHRQRIGIQYHRLDVSSAS) lie on the Cytoplasmic side of the membrane.

This sequence belongs to the major facilitator superfamily. Sugar transporter (TC 2.A.1.1) family. Glucose transporter subfamily.

The protein localises to the endomembrane system. It is found in the cytoplasm. Its subcellular location is the perinuclear region. It catalyses the reaction D-glucose(out) = D-glucose(in). Functionally, facilitative glucose transporter required for the development of the cardiovascular system. The protein is Solute carrier family 2, facilitated glucose transporter member 10 of Mus musculus (Mouse).